A 444-amino-acid chain; its full sequence is Trigger factor (444 aa).

The PPIase FKBP-type domain maps to 166 to 251; sequence GDQIVIDFKG…VKAVKAPKPA (86 aa).

This sequence belongs to the FKBP-type PPIase family. Tig subfamily.

It is found in the cytoplasm. It carries out the reaction [protein]-peptidylproline (omega=180) = [protein]-peptidylproline (omega=0). In terms of biological role, involved in protein export. Acts as a chaperone by maintaining the newly synthesized protein in an open conformation. Functions as a peptidyl-prolyl cis-trans isomerase. This is Trigger factor from Cereibacter sphaeroides (strain ATCC 17025 / ATH 2.4.3) (Rhodobacter sphaeroides).